Here is a 120-residue protein sequence, read N- to C-terminus: Large ribosomal subunit protein uL18 (120 aa).

The protein belongs to the universal ribosomal protein uL18 family. In terms of assembly, part of the 50S ribosomal subunit; part of the 5S rRNA/L5/L18/L25 subcomplex. Contacts the 5S and 23S rRNAs.

Its function is as follows. This is one of the proteins that bind and probably mediate the attachment of the 5S RNA into the large ribosomal subunit, where it forms part of the central protuberance. This Rhodospirillum centenum (strain ATCC 51521 / SW) protein is Large ribosomal subunit protein uL18.